Reading from the N-terminus, the 61-residue chain is Insect toxin BsIT2 (61 aa).

An LCN-type CS-alpha/beta domain is found at 1-61 (DGYIKKSKGC…RWKYETKTCK (61 aa)). 4 disulfides stabilise this stretch: cysteine 10–cysteine 60, cysteine 14–cysteine 35, cysteine 21–cysteine 42, and cysteine 25–cysteine 44.

It belongs to the long (4 C-C) scorpion toxin superfamily. Sodium channel inhibitor family. Beta subfamily. As to expression, expressed by the venom gland.

It is found in the secreted. Its function is as follows. Depressant insect beta-toxins cause a transient contraction paralysis followed by a slow flaccid paralysis. They bind voltage-independently at site-4 of sodium channels (Nav) and shift the voltage of activation toward more negative potentials thereby affecting sodium channel activation and promoting spontaneous and repetitive firing. This toxin is active only on insects. The polypeptide is Insect toxin BsIT2 (Hottentotta tamulus sindicus (Scorpion)).